A 157-amino-acid polypeptide reads, in one-letter code: Class-10 pathogenesis-related protein 1 (157 aa).

Belongs to the BetVI family. In terms of tissue distribution, expressed in roots. Detected in nodules and leaves, but not in stems and flowers.

The sequence is that of Class-10 pathogenesis-related protein 1 (PR10-1) from Medicago truncatula (Barrel medic).